The chain runs to 226 residues: Ethylene-responsive transcription factor-like protein At4g13040 (226 aa).

Disordered stretches follow at residues 63-109 and 195-226; these read EERS…RKRV and KKPK…SDKM. A compositionally biased stretch (basic residues) spans 97 to 109; sequence PPKRRKQHRRKRV. Positions 105 to 171 form a DNA-binding region, AP2/ERF; that stretch reads RRKRVHNQEP…REPNFELSEE (67 aa). A compositionally biased stretch (acidic residues) spans 217–226; the sequence is EEEEQDSDKM.

The protein belongs to the AP2/ERF transcription factor family.

Its subcellular location is the nucleus. Its function is as follows. Probably acts as a transcriptional activator. Binds to the GCC-box pathogenesis-related promoter element. May be involved in the regulation of gene expression by stress factors and by components of stress signal transduction pathways. The sequence is that of Ethylene-responsive transcription factor-like protein At4g13040 from Arabidopsis thaliana (Mouse-ear cress).